The following is a 267-amino-acid chain: Probable E3 ubiquitin-protein ligase dma1 (267 aa).

The 57-residue stretch at 60–116 (IYIGRYTERYNGGDVSAIVFRSKVVSRRHAQIFYENNTWYIQDMGSSSGTFLNHVRL) folds into the FHA domain. An RING-type zinc finger spans residues 192-236 (CCICLMPVLPCQALFVAPCSHSYHYKCIRPTLNESHPYFSCFICR).

Belongs to the DMA1 family. As to quaternary structure, interacts with sid4.

The protein localises to the cytoplasm. It localises to the cytoskeleton. Its subcellular location is the microtubule organizing center. The protein resides in the spindle pole body. It carries out the reaction S-ubiquitinyl-[E2 ubiquitin-conjugating enzyme]-L-cysteine + [acceptor protein]-L-lysine = [E2 ubiquitin-conjugating enzyme]-L-cysteine + N(6)-ubiquitinyl-[acceptor protein]-L-lysine.. In terms of biological role, probable E3 ubiquitin-protein ligase which is a component of the spindle assembly checkpoint, required to prevent septum formation and premature exit from mitosis if spindle function is compromised. Inhibits the septation initiation netwok (SIN) during spindle checkpoint activation. The effect appears to be mediated through preventing the SIN activator, plo1 kinase, from localizing to the SPB. The sequence is that of Probable E3 ubiquitin-protein ligase dma1 (dma1) from Schizosaccharomyces pombe (strain 972 / ATCC 24843) (Fission yeast).